An 808-amino-acid chain; its full sequence is Transcription activator of gluconeogenesis PAAG_01030 (808 aa).

Residues 1–90 (MTSSVRNGSP…SAKDPLRPRR (90 aa)) are disordered. Positions 69–83 (STSSTAASANNASAK) are enriched in low complexity. The segment at residues 97-125 (CFACQRAHLTCGDERPCQRCIKRGLQDTC) is a DNA-binding region (zn(2)-C6 fungal-type). Residues 158–170 (AARNKVNSNSQQR) show a composition bias toward polar residues. 5 disordered regions span residues 158–203 (AARN…FSTP), 236–285 (SAFQ…YGST), 322–387 (GAGD…IYNQ), 442–461 (PPTN…STPS), and 598–629 (TGGS…DNQS). Residues 171–188 (NGTNSNSDNNSTNTNSNN) are compositionally biased toward low complexity. Polar residues-rich tracts occupy residues 189-203 (KPSH…FSTP), 248-279 (FDLS…SQNP), 339-359 (GRSS…NQSP), and 377-387 (GPTNPRNIYNQ). Composition is skewed to low complexity over residues 442 to 451 (PPTNTQHQQQ) and 598 to 619 (TGGS…SRNS). Polar residues predominate over residues 620–629 (ATTTVMDNQS).

The protein belongs to the ERT1/acuK family.

The protein localises to the nucleus. Its function is as follows. Transcription factor which regulates nonfermentable carbon utilization. Activator of gluconeogenetic genes. The chain is Transcription activator of gluconeogenesis PAAG_01030 from Paracoccidioides lutzii (strain ATCC MYA-826 / Pb01) (Paracoccidioides brasiliensis).